The primary structure comprises 188 residues: Transcription factor FapR (188 aa).

The protein belongs to the FapR family.

Its function is as follows. Transcriptional factor involved in regulation of membrane lipid biosynthesis by repressing genes involved in fatty acid and phospholipid metabolism. The polypeptide is Transcription factor FapR (Bacillus licheniformis (strain ATCC 14580 / DSM 13 / JCM 2505 / CCUG 7422 / NBRC 12200 / NCIMB 9375 / NCTC 10341 / NRRL NRS-1264 / Gibson 46)).